Consider the following 240-residue polypeptide: Inhibitor of growth protein 5 (240 aa).

Lys-114 carries the N6-acetyllysine modification. Residues 116 to 165 form a disordered region; that stretch reads EGSDFESSGGRGLKKGRGQKEKRGSRGRGRRTSEEDTPKKKKHKGGSEFT. At Ser-118 the chain carries Phosphoserine. An Omega-N-methylarginine modification is found at Arg-126. Residues 186 to 235 form a PHD-type zinc finger; sequence PTYCLCHQVSYGEMIGCDNPDCPIEWFHFACVDLTTKPKGKWFCPRCVQE. Positions 189, 191, 202, 207, 213, 216, 229, and 232 each coordinate Zn(2+).

It belongs to the ING family. In terms of assembly, component of the HBO1 complex composed of KAT7/HBO1, MEAF6, ING5, and one scaffold subunit: complexes containing BRPF scaffold (BRPF1, BRD1/BRPF2 or BRPF3) direct KAT7/HBO1 specificity towards H3K14ac, while complexes containing JADE scaffold (JADE1, JADE2 and JADE3) mediate acetylation of histone H4. Component of the MOZ/MORF complex composed at least of ING5, KAT6A, KAT6B, MEAF6 and one of BRPF1, BRD1/BRPF2 and BRPF3. Interacts with H3K4me3 and to a lesser extent with H3K4me2. Interacts with EP300 and p53/TP53. Interacts with INCA1. As to expression, down-regulated in bone marrow cells in acute myeloid leukemia patients as compared with normal bone marrow cells.

Its subcellular location is the nucleus. The protein resides in the chromosome. Its function is as follows. Component of the HBO1 complex, which specifically mediates acetylation of histone H3 at 'Lys-14' (H3K14ac) and, to a lower extent, acetylation of histone H4. Component of the MOZ/MORF complex which has a histone H3 acetyltransferase activity. Through chromatin acetylation it may regulate DNA replication and may function as a transcriptional coactivator. Inhibits cell growth, induces a delay in S-phase progression and enhances Fas-induced apoptosis in an INCA1-dependent manner. In Homo sapiens (Human), this protein is Inhibitor of growth protein 5 (ING5).